The sequence spans 296 residues: Phosphoribosylaminoimidazole-succinocarboxamide synthase (296 aa).

It belongs to the SAICAR synthetase family.

It catalyses the reaction 5-amino-1-(5-phospho-D-ribosyl)imidazole-4-carboxylate + L-aspartate + ATP = (2S)-2-[5-amino-1-(5-phospho-beta-D-ribosyl)imidazole-4-carboxamido]succinate + ADP + phosphate + 2 H(+). It participates in purine metabolism; IMP biosynthesis via de novo pathway; 5-amino-1-(5-phospho-D-ribosyl)imidazole-4-carboxamide from 5-amino-1-(5-phospho-D-ribosyl)imidazole-4-carboxylate: step 1/2. The sequence is that of Phosphoribosylaminoimidazole-succinocarboxamide synthase from Desulfotalea psychrophila (strain LSv54 / DSM 12343).